The primary structure comprises 1498 residues: Transposon Ty3-I Gag-Pol polyprotein (1498 aa).

The segment at 265–282 (RLCFYCKKEGHRLNECRA) adopts a CCHC-type zinc-finger fold. Asp336 (for protease activity; shared with dimeric partner) is an active-site residue. Positions 470 to 490 (TDPKSAGNRGNPRNTKLSLAP) are disordered. The region spanning 646-823 (LDNKFIVPSK…EETEFLGYSI (178 aa)) is the Reverse transcriptase domain. The Mg(2+) site is built by Asp712, Asp774, and Asp775. In terms of domain architecture, RNase H Ty3/gyspy-type spans 919–1037 (DASKDGIGAV…VADAISRAIY (119 aa)). Residues 1132 to 1171 (HTLFGGHFGVTVTLAKISPIYYWPKLQHSIIQYIRTCVQC) form an integrase-type zinc finger-like region. The Integrase catalytic domain occupies 1185–1350 (LQPLPIAEGR…SPFEIDLGYL (166 aa)). Mg(2+)-binding residues include Asp1201 and Asp1262.

In terms of assembly, the protease is a homodimer, whose active site consists of two apposed aspartic acid residues. Initially, virus-like particles (VLPs) are composed of the structural unprocessed proteins Gag and Gag-Pol, and also contain the host initiator methionine tRNA (tRNA(i)-Met) which serves as a primer for minus-strand DNA synthesis, and a dimer of genomic Ty RNA. Processing of the polyproteins occurs within the particle and proceeds by an ordered pathway, called maturation. First, the protease (PR) is released by autocatalytic cleavage of the Gag-Pol polyprotein, and this cleavage is a prerequisite for subsequent processing at the remaining sites to release the mature structural and catalytic proteins. Maturation takes place prior to the RT reaction and is required to produce transposition-competent VLPs.

Its subcellular location is the cytoplasm. The protein resides in the nucleus. It catalyses the reaction DNA(n) + a 2'-deoxyribonucleoside 5'-triphosphate = DNA(n+1) + diphosphate. The catalysed reaction is Endonucleolytic cleavage to 5'-phosphomonoester.. Functionally, capsid protein (CA) is the structural component of the virus-like particle (VLP), forming the shell that encapsulates the genomic RNA-nucleocapsid complex. Its function is as follows. Nucleocapsid protein p11 (NC) forms the nucleocore that coats the retro-elements dimeric RNA. Binds these RNAs through its zinc fingers. Promotes primer tRNA(i)-Met annealing to the multipartite primer-binding site (PBS), dimerization of Ty3 RNA and initiation of reverse transcription. In terms of biological role, the aspartyl protease (PR) mediates the proteolytic cleavages of the Gag and Gag-Pol polyproteins after assembly of the VLP. Reverse transcriptase/ribonuclease H (RT) is a multifunctional enzyme that catalyzes the conversion of the retro-elements RNA genome into dsDNA within the VLP. The enzyme displays a DNA polymerase activity that can copy either DNA or RNA templates, and a ribonuclease H (RNase H) activity that cleaves the RNA strand of RNA-DNA heteroduplexes during plus-strand synthesis and hydrolyzes RNA primers. The conversion leads to a linear dsDNA copy of the retrotransposon that includes long terminal repeats (LTRs) at both ends. Functionally, integrase (IN) targets the VLP to the nucleus, where a subparticle preintegration complex (PIC) containing at least integrase and the newly synthesized dsDNA copy of the retrotransposon must transit the nuclear membrane. Once in the nucleus, integrase performs the integration of the dsDNA into the host genome. This Saccharomyces cerevisiae (strain ATCC 204508 / S288c) (Baker's yeast) protein is Transposon Ty3-I Gag-Pol polyprotein (TY3B-I).